Here is a 968-residue protein sequence, read N- to C-terminus: Insulin receptor substrate 1 (968 aa).

The 102-residue stretch at 8 to 109 (GMALSGYLKK…WLDKLLVLQR (102 aa)) folds into the PH domain. Residues 122 to 236 (YDHVWQVVIQ…SAMSAKTESN (115 aa)) enclose the IRS-type PTB domain. The interval 248 to 269 (DLSHEPMRKRSSSANEASKPIN) is disordered. A phosphoserine mark is found at Ser286 and Ser287. A compositionally biased stretch (polar residues) spans 304–329 (RNGTLSESSNQTYFGSNHGLRSNTIS). A disordered region spans residues 304-370 (RNGTLSESSN…VDESDDNGSF (67 aa)). Ser342 carries the post-translational modification Phosphoserine. The residue at position 411 (Tyr411) is a Phosphotyrosine; by INSR. Positions 411–414 (YIPM) match the YXXM motif 1 motif. The segment at 528 to 555 (TANRSQSSITKEGTSYGSSANRQKKSTS) is disordered. Positions 529-555 (ANRSQSSITKEGTSYGSSANRQKKSTS) are enriched in polar residues. Ser555 is modified (phosphoserine). The YXXM motif 2 signature appears at 641 to 644 (YLEM). Residues 697-711 (EKWREQPSRSEEKKS) show a composition bias toward basic and acidic residues. The disordered stretch occupies residues 697 to 739 (EKWREQPSRSEEKKSNSPLNDNTFSSKPTNVESTSKSHDVHSA). Residues 712–730 (NSPLNDNTFSSKPTNVEST) show a composition bias toward polar residues. Tyr911 carries the phosphotyrosine; by INSR modification. The tract at residues 922–968 (QNPAKYLKRGSRESPPVSACPEDGNTYAKIDFDQSDSSSSSSNIFNT) is disordered. Phosphoserine is present on residues Ser932 and Ser935. Tyr948 carries the post-translational modification Phosphotyrosine; by INSR. A compositionally biased stretch (low complexity) spans 956-968 (SDSSSSSSNIFNT).

In terms of assembly, bindings to phosphatidylinositol 3-kinase and SHP2.

Functionally, activates phosphatidylinositol 3-kinase when bound to the regulatory p85 subunit. May mediate the control of various cellular processes by insulin-like peptides. When phosphorylated by the insulin receptor binds specifically to various cellular proteins containing SH2 domains. Involved in control of cell proliferation, cell size, and body and organ growth throughout development. Also has a role in a signaling pathway controlling the physiological response required to endure periods of low nutrient conditions. Insulin/insulin-like growth factor (IGF) signaling pathway has a role in regulating aging and is necessary in the ovary for vitellogenic maturation. In Drosophila melanogaster (Fruit fly), this protein is Insulin receptor substrate 1 (chico).